Here is a 208-residue protein sequence, read N- to C-terminus: Large ribosomal subunit protein uL3 (208 aa).

Position 149 is an N5-methylglutamine (Gln149).

It belongs to the universal ribosomal protein uL3 family. Part of the 50S ribosomal subunit. Forms a cluster with proteins L14 and L19. In terms of processing, methylated by PrmB.

Functionally, one of the primary rRNA binding proteins, it binds directly near the 3'-end of the 23S rRNA, where it nucleates assembly of the 50S subunit. The protein is Large ribosomal subunit protein uL3 of Mannheimia succiniciproducens (strain KCTC 0769BP / MBEL55E).